The sequence spans 303 residues: tRNA pseudouridine synthase B (303 aa).

The Nucleophile role is filled by Asp47.

Belongs to the pseudouridine synthase TruB family. Type 1 subfamily.

The catalysed reaction is uridine(55) in tRNA = pseudouridine(55) in tRNA. In terms of biological role, responsible for synthesis of pseudouridine from uracil-55 in the psi GC loop of transfer RNAs. The polypeptide is tRNA pseudouridine synthase B (Legionella pneumophila subsp. pneumophila (strain Philadelphia 1 / ATCC 33152 / DSM 7513)).